We begin with the raw amino-acid sequence, 388 residues long: DNA replication and repair protein RecF (388 aa).

Residue 30–37 (GNNAQGKS) coordinates ATP.

Belongs to the RecF family.

It localises to the cytoplasm. Its function is as follows. The RecF protein is involved in DNA metabolism; it is required for DNA replication and normal SOS inducibility. RecF binds preferentially to single-stranded, linear DNA. It also seems to bind ATP. The sequence is that of DNA replication and repair protein RecF from Picosynechococcus sp. (strain ATCC 27264 / PCC 7002 / PR-6) (Agmenellum quadruplicatum).